Consider the following 181-residue polypeptide: Large ribosomal subunit protein uL5c (181 aa).

The protein belongs to the universal ribosomal protein uL5 family. As to quaternary structure, part of the 50S ribosomal subunit; contacts the 5S rRNA.

The protein localises to the plastid. Its subcellular location is the cyanelle. Binds 5S rRNA, forms part of the central protuberance of the 50S subunit. This is Large ribosomal subunit protein uL5c (rpl5) from Cyanophora paradoxa.